The primary structure comprises 511 residues: 2-isopropylmalate synthase (511 aa).

Basic and acidic residues predominate over residues 1–16 (MTRKIDIFDTTLRDGE). Positions 1–23 (MTRKIDIFDTTLRDGEQSPGASM) are disordered. A Pyruvate carboxyltransferase domain is found at 5 to 268 (IDIFDTTLRD…HTDVVTQELT (264 aa)). 4 residues coordinate Mn(2+): Asp14, His203, His205, and Asn239. Residues 392-511 (ALESVQVVCG…IQTTRSKQGK (120 aa)) are regulatory domain.

The protein belongs to the alpha-IPM synthase/homocitrate synthase family. LeuA type 1 subfamily. As to quaternary structure, homodimer. Mn(2+) is required as a cofactor.

The protein localises to the cytoplasm. The enzyme catalyses 3-methyl-2-oxobutanoate + acetyl-CoA + H2O = (2S)-2-isopropylmalate + CoA + H(+). It functions in the pathway amino-acid biosynthesis; L-leucine biosynthesis; L-leucine from 3-methyl-2-oxobutanoate: step 1/4. Catalyzes the condensation of the acetyl group of acetyl-CoA with 3-methyl-2-oxobutanoate (2-ketoisovalerate) to form 3-carboxy-3-hydroxy-4-methylpentanoate (2-isopropylmalate). The sequence is that of 2-isopropylmalate synthase from Olsenella uli (strain ATCC 49627 / DSM 7084 / CCUG 31166 / CIP 109912 / JCM 12494 / LMG 11480 / NCIMB 702895 / VPI D76D-27C) (Lactobacillus uli).